We begin with the raw amino-acid sequence, 306 residues long: Phenylcoumaran benzylic ether reductase POP1 (306 aa).

Residues 9 to 15 (GGTGYIG), Arg34, and Lys43 each bind NADP(+). The Proton acceptor role is filled by Lys131. Arg135 provides a ligand contact to NADP(+).

It belongs to the NmrA-type oxidoreductase family. Isoflavone reductase subfamily.

The enzyme catalyses (-)-dehydrodiconiferyl alcohol + NADPH + H(+) = (S)-isodihydrodehydrodiconiferyl alcohol + NADP(+). It catalyses the reaction (+)-dehydrodiconiferyl alcohol + NADPH + H(+) = (R)-isodihydrodehydrodiconiferyl alcohol + NADP(+). The catalysed reaction is (2R,3S)-dihydrodehydrodiconiferyl alcohol + NADPH + H(+) = (S)-tetrahydrodehydrodiconiferyl alcohol + NADP(+). It carries out the reaction (2S,3R)-dihydrodehydrodiconiferyl alcohol + NADPH + H(+) = (R)-tetrahydrodehydrodiconiferyl alcohol + NADP(+). In terms of biological role, oxidoreductase involved in lignan biosynthesis. Catalyzes the NADPH-dependent reduction of phenylcoumaran benzylic ethers. Converts dehydrodiconiferyl alcohol (DDC) to isodihydrodehydrodiconiferyl alcohol (IDDDC), and dihydrodehydrodiconiferyl alcohol (DDDC) to tetrahydrodehydrodiconiferyl alcohol (TDDC). The protein is Phenylcoumaran benzylic ether reductase POP1 of Populus trichocarpa (Western balsam poplar).